We begin with the raw amino-acid sequence, 183 residues long: Bifunctional protein PyrR (183 aa).

Residues 102–114 carry the PRPP-binding motif; sequence VVLVDDVLYTGRT.

The protein belongs to the purine/pyrimidine phosphoribosyltransferase family. PyrR subfamily. Homodimer and homohexamer; in equilibrium.

The enzyme catalyses UMP + diphosphate = 5-phospho-alpha-D-ribose 1-diphosphate + uracil. In terms of biological role, regulates transcriptional attenuation of the pyrimidine nucleotide (pyr) operon by binding in a uridine-dependent manner to specific sites on pyr mRNA. This disrupts an antiterminator hairpin in the RNA and favors formation of a downstream transcription terminator, leading to a reduced expression of downstream genes. Also displays a weak uracil phosphoribosyltransferase activity which is not physiologically significant. The protein is Bifunctional protein PyrR of Listeria monocytogenes serotype 4b (strain CLIP80459).